Reading from the N-terminus, the 323-residue chain is tRNA U34 carboxymethyltransferase (323 aa).

Carboxy-S-adenosyl-L-methionine-binding positions include K91, W105, K110, G130, 152–154 (DPT), 181–182 (IE), M196, Y200, and R315.

This sequence belongs to the class I-like SAM-binding methyltransferase superfamily. CmoB family. As to quaternary structure, homotetramer.

It catalyses the reaction carboxy-S-adenosyl-L-methionine + 5-hydroxyuridine(34) in tRNA = 5-carboxymethoxyuridine(34) in tRNA + S-adenosyl-L-homocysteine + H(+). In terms of biological role, catalyzes carboxymethyl transfer from carboxy-S-adenosyl-L-methionine (Cx-SAM) to 5-hydroxyuridine (ho5U) to form 5-carboxymethoxyuridine (cmo5U) at position 34 in tRNAs. This Escherichia fergusonii (strain ATCC 35469 / DSM 13698 / CCUG 18766 / IAM 14443 / JCM 21226 / LMG 7866 / NBRC 102419 / NCTC 12128 / CDC 0568-73) protein is tRNA U34 carboxymethyltransferase.